Consider the following 155-residue polypeptide: Ribosomal RNA large subunit methyltransferase H (155 aa).

Residues Leu-73, Gly-104, and 123–128 each bind S-adenosyl-L-methionine; that span reads LSPLTL.

The protein belongs to the RNA methyltransferase RlmH family. In terms of assembly, homodimer.

The protein localises to the cytoplasm. The enzyme catalyses pseudouridine(1915) in 23S rRNA + S-adenosyl-L-methionine = N(3)-methylpseudouridine(1915) in 23S rRNA + S-adenosyl-L-homocysteine + H(+). Specifically methylates the pseudouridine at position 1915 (m3Psi1915) in 23S rRNA. The protein is Ribosomal RNA large subunit methyltransferase H of Pseudomonas fluorescens (strain ATCC BAA-477 / NRRL B-23932 / Pf-5).